The chain runs to 163 residues: Adenosine 5'-monophosphoramidase HINT2 (163 aa).

The N-terminal 17 residues, 1-17 (MAAAVVLAAGLRAARRA), are a transit peptide targeting the mitochondrion. The 109-residue stretch at 55 to 163 (IFSRILDKSL…GGRQLQWPPG (109 aa)) folds into the HIT domain. AMP-binding residues include serine 63 and aspartate 80. N6-acetyllysine is present on lysine 119. Residue asparagine 136 coordinates AMP. Lysine 139 carries the post-translational modification N6-acetyllysine. Residues 142–145 (AQSV) and 149–151 (HIH) contribute to the AMP site. Residues 147–151 (HLHIH) carry the Histidine triad motif motif. Histidine 149 functions as the Tele-AMP-histidine intermediate in the catalytic mechanism.

The protein belongs to the HINT family. In terms of tissue distribution, high expression in liver and pancreas. Expression is significantly down-regulated in hepatocellular carcinoma (HCC) patients.

The protein resides in the mitochondrion. The catalysed reaction is adenosine 5'-phosphoramidate + H2O = AMP + NH4(+). Its function is as follows. Exhibits adenosine 5'-monophosphoramidase activity, hydrolyzing purine nucleotide phosphoramidates with a single phosphate group such as adenosine 5'monophosphoramidate (AMP-NH2) to yield AMP and NH2. Hydrolyzes adenosine 5'-O-p-nitrophenylphosphoramidate (AMP-pNA). Hydrolyzes fluorogenic purine nucleoside tryptamine phosphoramidates in vitro. May be involved in steroid biosynthesis. May play a role in apoptosis. In Homo sapiens (Human), this protein is Adenosine 5'-monophosphoramidase HINT2.